Reading from the N-terminus, the 351-residue chain is Glycerol-3-phosphate dehydrogenase [NAD(P)+] (351 aa).

The NADPH site is built by Ser-18, Trp-19, Arg-38, and Lys-122. Residues Lys-122, Gly-153, and Ser-155 each contribute to the sn-glycerol 3-phosphate site. Ala-157 contributes to the NADPH binding site. Sn-glycerol 3-phosphate-binding residues include Lys-208, Asp-261, Ser-271, Arg-272, and Asn-273. Lys-208 (proton acceptor) is an active-site residue. Arg-272 is an NADPH binding site. Glu-297 contacts NADPH.

It belongs to the NAD-dependent glycerol-3-phosphate dehydrogenase family.

It localises to the cytoplasm. It catalyses the reaction sn-glycerol 3-phosphate + NAD(+) = dihydroxyacetone phosphate + NADH + H(+). The catalysed reaction is sn-glycerol 3-phosphate + NADP(+) = dihydroxyacetone phosphate + NADPH + H(+). The protein operates within membrane lipid metabolism; glycerophospholipid metabolism. In terms of biological role, catalyzes the reduction of the glycolytic intermediate dihydroxyacetone phosphate (DHAP) to sn-glycerol 3-phosphate (G3P), the key precursor for phospholipid synthesis. The chain is Glycerol-3-phosphate dehydrogenase [NAD(P)+] from Bordetella bronchiseptica (strain ATCC BAA-588 / NCTC 13252 / RB50) (Alcaligenes bronchisepticus).